We begin with the raw amino-acid sequence, 543 residues long: Adenosine deaminase 2 (543 aa).

The signal sequence occupies residues 1–26; that stretch reads MFLKFKNIFFIVLTLSIVFNGLIVNS. A compositionally biased stretch (low complexity) spans 31 to 54; the sequence is INNKNNNNNNNNKDLSSSESGSSS. Positions 31 to 58 are disordered; it reads INNKNNNNNNNNKDLSSSESGSSSDINP. The N-linked (GlcNAc...) asparagine glycan is linked to Asn-126. 2 residues coordinate Zn(2+): His-144 and His-146. Residue Asn-179 is glycosylated (N-linked (GlcNAc...) asparagine). 232–239 is a substrate binding site; it reads WRKFDGIF. Residues Asn-309 and Asn-326 are each glycosylated (N-linked (GlcNAc...) asparagine). Gly-355 provides a ligand contact to substrate. His-389 is a Zn(2+) binding site. Catalysis depends on Glu-392, which acts as the Proton donor. N-linked (GlcNAc...) asparagine glycosylation occurs at Asn-397. The Proton acceptor role is filled by His-414. Position 471 (Asp-471) interacts with Zn(2+). Asp-472 lines the substrate pocket. Asn-508 and Asn-514 each carry an N-linked (GlcNAc...) asparagine glycan.

It belongs to the metallo-dependent hydrolases superfamily. Adenosine and AMP deaminases family. ADGF subfamily. It depends on Zn(2+) as a cofactor.

It is found in the secreted. The enzyme catalyses adenosine + H2O + H(+) = inosine + NH4(+). Adenosine deaminase that may contribute to the degradation of extracellular adenosine, a signaling molecule that controls a variety of cellular responses. May play a role in the regulation of cell proliferation. This chain is Adenosine deaminase 2, found in Dictyostelium discoideum (Social amoeba).